Reading from the N-terminus, the 231-residue chain is Cuticle protein LPCP-23 (231 aa).

A signal peptide spans 1-17 (MAFKFVVFAAALAYANA). 2 consecutive repeat copies span residues 130 to 133 (AAPV) and 199 to 202 (AAPV).

Component of the cuticle of Tenebrio molitor. The sequence is that of Cuticle protein LPCP-23 (LPCP-23) from Tenebrio molitor (Yellow mealworm beetle).